The chain runs to 256 residues: 2-aminoethanethiol dioxygenase (256 aa).

3 residues coordinate Fe cation: H100, H102, and H179.

Monomer. Fe cation is required as a cofactor. As to expression, ubiquitous, with highest expression in brain, heart and skeletal muscle (at protein level).

It catalyses the reaction cysteamine + O2 = hypotaurine + H(+). It carries out the reaction N-terminal L-cysteinyl-[protein] + O2 = N-terminal S-hydroxy-S-oxy-L-cysteinyl-[protein] + H(+). Functionally, plays a vital role in regulating thiol metabolism and preserving oxygen homeostasis by oxidizing the sulfur of cysteamine and N-terminal cysteine-containing proteins to their corresponding sulfinic acids using O2 as a cosubstrate. Catalyzes the oxidation of cysteamine (2-aminoethanethiol) to hypotaurine. Catalyzes the oxidation of the regulator of G-protein signaling 5 (RGS5). Also oxidizes proteins RGS4 and interleukin-32 (IL32). This is 2-aminoethanethiol dioxygenase (Ado) from Mus musculus (Mouse).